Reading from the N-terminus, the 319-residue chain is MKRIGVLTSGGDSPGMNAAIRAVVRKAIFHGLEVYGISYGYQGLINGDIKKMELGSVGDIIHRGGTMLYTARCEEFKTLEGQQKGIEQLKKFGIEGLVVIGGDGSYRGAQQLTKHGFPTIGVPGTIDNDIPGTDFTIGFDTALNTVIDAIDKIRDTATSHDRTYVIEVMGRHAGDLALWAGLADGAETIVIPEAEHNMEQILATIKRGQERGKKHSIIVVAEGVGSGIEFGDRISKEMNMETRVTVLGHIQRGGSPTGADRVLASRLGAKAVDLLLEGKAGMTVGIQKNELVYHPIDEILDRPHTIDQEMYKLSQELSI.

G11 is a binding site for ATP. Residue R21–R25 coordinates ADP. ATP contacts are provided by residues R72 to C73 and G102 to S105. D103 is a binding site for Mg(2+). A substrate-binding site is contributed by T125–D127. The active-site Proton acceptor is D127. R154 is an ADP binding site. Substrate is bound by residues R162 and M169–R171. ADP-binding positions include G185–E187, R211, and K213–H215. Substrate is bound by residues E222, R243, and H249–R252.

It belongs to the phosphofructokinase type A (PFKA) family. ATP-dependent PFK group I subfamily. Prokaryotic clade 'B1' sub-subfamily. Homotetramer. Mg(2+) serves as cofactor.

It localises to the cytoplasm. It carries out the reaction beta-D-fructose 6-phosphate + ATP = beta-D-fructose 1,6-bisphosphate + ADP + H(+). Its pathway is carbohydrate degradation; glycolysis; D-glyceraldehyde 3-phosphate and glycerone phosphate from D-glucose: step 3/4. Its activity is regulated as follows. Allosterically activated by ADP and other diphosphonucleosides, and allosterically inhibited by phosphoenolpyruvate. In terms of biological role, catalyzes the phosphorylation of D-fructose 6-phosphate to fructose 1,6-bisphosphate by ATP, the first committing step of glycolysis. This chain is ATP-dependent 6-phosphofructokinase, found in Shouchella clausii (strain KSM-K16) (Alkalihalobacillus clausii).